A 668-amino-acid polypeptide reads, in one-letter code: UvrABC system protein B (668 aa).

One can recognise a Helicase ATP-binding domain in the interval 36–423 (DNIKGGEKAQ…TETVVEQIIR (388 aa)). 49 to 56 (GATGTGKT) is an ATP binding site. Residues 102-125 (YYDYYQPEAYVPSSDTYIEKDSSI) carry the Beta-hairpin motif. One can recognise a Helicase C-terminal domain in the interval 440–606 (QMDDLLGEIN…TIKKEIRDLI (167 aa)). The 36-residue stretch at 632–667 (QEAIKKLQKQMHEAAELLDFELAAQIRDMVLELKSM) folds into the UVR domain.

The protein belongs to the UvrB family. As to quaternary structure, forms a heterotetramer with UvrA during the search for lesions. Interacts with UvrC in an incision complex.

It localises to the cytoplasm. In terms of biological role, the UvrABC repair system catalyzes the recognition and processing of DNA lesions. A damage recognition complex composed of 2 UvrA and 2 UvrB subunits scans DNA for abnormalities. Upon binding of the UvrA(2)B(2) complex to a putative damaged site, the DNA wraps around one UvrB monomer. DNA wrap is dependent on ATP binding by UvrB and probably causes local melting of the DNA helix, facilitating insertion of UvrB beta-hairpin between the DNA strands. Then UvrB probes one DNA strand for the presence of a lesion. If a lesion is found the UvrA subunits dissociate and the UvrB-DNA preincision complex is formed. This complex is subsequently bound by UvrC and the second UvrB is released. If no lesion is found, the DNA wraps around the other UvrB subunit that will check the other stand for damage. In Streptococcus thermophilus (strain CNRZ 1066), this protein is UvrABC system protein B.